Consider the following 129-residue polypeptide: uncharacterized protein (129 aa).

The next 3 helical transmembrane spans lie at 22–42 (LASSFSNASTLLSFVFFFFFF), 55–75 (VGSFSASASAETLLDFFFFFF), and 88–108 (LPFTAASKSSGITFLVFFFFF).

Its subcellular location is the membrane. This is an uncharacterized protein from Saccharomyces cerevisiae (strain ATCC 204508 / S288c) (Baker's yeast).